Reading from the N-terminus, the 2055-residue chain is Citron Rho-interacting kinase (2055 aa).

An N-acetylmethionine modification is found at methionine 1. The Protein kinase domain occupies 97–359; it reads FEVRSLVGCG…FEGLCCHPFF (263 aa). ATP is bound by residues 103–111 and lysine 126; that span reads VGCGHFAEV. Catalysis depends on aspartate 221, which acts as the Proton acceptor. Residues 360 to 430 enclose the AGC-kinase C-terminal domain; that stretch reads ARTDWNNIRN…SKALGYLGRS (71 aa). Residues serine 432, serine 439, serine 479, and serine 581 each carry the phosphoserine modification. 3 coiled-coil regions span residues 441 to 1086, 1091 to 1247, and 1275 to 1325; these read AKVS…QWEA, LGDE…VLYS, and AKKK…RKAT. The interval 1132-1328 is interaction with Rho/Rac; that stretch reads LAVKEHKAEI…AAHRKATDHP (197 aa). Tyrosine 1237 bears the Phosphotyrosine mark. Positions 1316 to 1329 are enriched in basic and acidic residues; that stretch reads REEAAHRKATDHPH. Disordered regions lie at residues 1316 to 1336 and 1348 to 1377; these read REEAAHRKATDHPHPSTPATA and SPEHQPSAMSLLAPPSSRRKESSTPEEFSR. The span at 1353 to 1363 shows a compositional bias: low complexity; it reads PSAMSLLAPPS. The span at 1365–1377 shows a compositional bias: basic and acidic residues; sequence RRKESSTPEEFSR. Residues 1388–1437 form a Phorbol-ester/DAG-type zinc finger; it reads PHRFNVGLNMRATKCAVCLDTVHFGRQASKCLECQVMCHPKCSTCLPATC. The PH domain occupies 1469–1589; sequence SLHLEGWMKV…WVTALESVVA (121 aa). Positions 1617–1907 constitute a CNH domain; sequence RLDMNCTLPF…RYLGPAISSG (291 aa). Position 1747 is an N6-acetyllysine (lysine 1747). The interval 1932–2040 is disordered; the sequence is SGTEQHRVPS…RGRLPAGAVR (109 aa). The span at 1939–1948 shows a compositional bias: polar residues; that stretch reads VPSTSRSSPN. Phosphoserine is present on serine 1966. The segment covering 1974–2031 has biased composition (basic and acidic residues); sequence SHPREPSTPHRYRDREGRTELRRDKSPGRPLEREKSPGRMLSTRRERSPGRLFEDSSR. The SH3-binding motif lies at 1979–1984; it reads PSTPHR. Serine 2021 is subject to Phosphoserine. Threonine 2041 bears the Phosphothreonine mark.

The protein belongs to the protein kinase superfamily. AGC Ser/Thr protein kinase family. Interacts with TTC3. Homodimer. Directly interacts with KIF14 depending on the activation state (stronger interaction with the kinase-dead form). As to expression, a major signal was observed in testis and brain, but it was also detected in thymus, spleen, kidney, heart and lung.

The protein localises to the cytoplasm. It catalyses the reaction L-seryl-[protein] + ATP = O-phospho-L-seryl-[protein] + ADP + H(+). The catalysed reaction is L-threonyl-[protein] + ATP = O-phospho-L-threonyl-[protein] + ADP + H(+). Its function is as follows. Plays a role in cytokinesis. Required for KIF14 localization to the central spindle and midbody. Probable RHO/RAC effector that binds to the GTP-bound forms of RHO and RAC1. It probably binds p21 with a tighter specificity in vivo. Displays serine/threonine protein kinase activity. Plays an important role in the regulation of cytokinesis and the development of the central nervous system. Phosphorylates MYL9/MLC2. This chain is Citron Rho-interacting kinase (Cit), found in Mus musculus (Mouse).